The following is a 213-amino-acid chain: Protein GET1 (213 aa).

Residues 1–4 are Lumenal-facing; it reads MPSL. A helical transmembrane segment spans residues 5-24; sequence LLVVFILQFLLHIINTVGAS. Residues 25–110 lie on the Cytoplasmic side of the membrane; the sequence is TVNDLLWILY…AFTSAVSTLR (86 aa). The stretch at 41–68 forms a coiled coil; the sequence is TSSSAQKAQKLKKEIVQLKRELGATSAQ. Residues 111–131 traverse the membrane as a helical segment; the sequence is WLGTQGLRFVLQFWFAKSPMF. The Lumenal segment spans residues 132-155; sequence WMPAGWLPFYVEWILSFPRAPLGS. A helical membrane pass occupies residues 156–172; the sequence is VSINVWGIACASMIALA. The Cytoplasmic segment spans residues 173–213; the sequence is AEGLAAVWVLATKRPTPIATEKKEAMAFAADQKSSGEKKEL.

This sequence belongs to the WRB/GET1 family. As to quaternary structure, interacts with GET3.

It is found in the endoplasmic reticulum membrane. In terms of biological role, required for the post-translational delivery of tail-anchored (TA) proteins to the endoplasmic reticulum. Acts as a membrane receptor for soluble GET3, which recognizes and selectively binds the transmembrane domain of TA proteins in the cytosol. In Phaeosphaeria nodorum (strain SN15 / ATCC MYA-4574 / FGSC 10173) (Glume blotch fungus), this protein is Protein GET1.